A 220-amino-acid chain; its full sequence is 7-cyano-7-deazaguanine synthase 1 (220 aa).

10–20 (FSGGIDSTVLL) provides a ligand contact to ATP. Positions 183, 191, 194, and 197 each coordinate Zn(2+).

This sequence belongs to the QueC family. Homodimer. Zn(2+) serves as cofactor.

It carries out the reaction 7-carboxy-7-deazaguanine + NH4(+) + ATP = 7-cyano-7-deazaguanine + ADP + phosphate + H2O + H(+). It functions in the pathway purine metabolism; 7-cyano-7-deazaguanine biosynthesis. Functionally, catalyzes the ATP-dependent conversion of 7-carboxy-7-deazaguanine (CDG) to 7-cyano-7-deazaguanine (preQ(0)). The sequence is that of 7-cyano-7-deazaguanine synthase 1 from Desulfitobacterium hafniense (strain Y51).